A 190-amino-acid chain; its full sequence is 2-phospho-L-lactate guanylyltransferase (190 aa).

Belongs to the CofC family. Homodimer.

It carries out the reaction (2S)-2-phospholactate + GTP + H(+) = (2S)-lactyl-2-diphospho-5'-guanosine + diphosphate. It functions in the pathway cofactor biosynthesis; coenzyme F420 biosynthesis. Guanylyltransferase that catalyzes the activation of (2S)-2-phospholactate (2-PL) as (2S)-lactyl-2-diphospho-5'-guanosine, via the condensation of 2-PL with GTP. It is involved in the biosynthesis of coenzyme F420, a hydride carrier cofactor. This chain is 2-phospho-L-lactate guanylyltransferase, found in Methanopyrus kandleri (strain AV19 / DSM 6324 / JCM 9639 / NBRC 100938).